The chain runs to 253 residues: DnaJ homolog subfamily C member 8 (253 aa).

Residue Ala-2 is modified to N-acetylalanine. A Phosphoserine modification is found at Ser-35. Positions 57–124 (NPFEVLQIDP…QKKRALDVIQ (68 aa)) constitute a J domain. Lys-146 bears the N6-acetyllysine mark. The segment covering 181–222 (EAKEMHERKRQREEEIEAQEKAKREREWQKNFEESRDGRVDS) has biased composition (basic and acidic residues). The segment at 181–253 (EAKEMHERKR…PPKVKMEQRE (73 aa)) is disordered. Short sequence motifs (nuclear localization signal) lie at residues 189 to 192 (KRQR) and 203 to 206 (KRER). Ser-222 carries the post-translational modification Phosphoserine. Positions 231-240 (KGKKEKKNRT) are enriched in basic residues. The interval 232 to 253 (GKKEKKNRTFLRPPKVKMEQRE) is essential for polyglutamine aggregation suppression.

As to quaternary structure, interacts with SRPK1. Interacts with HSP70 (HSPA1A or HSPA1B). In terms of tissue distribution, ubiquitous.

The protein resides in the nucleus. Functionally, suppresses polyglutamine (polyQ) aggregation of ATXN3 in neuronal cells. This chain is DnaJ homolog subfamily C member 8 (DNAJC8), found in Homo sapiens (Human).